A 362-amino-acid polypeptide reads, in one-letter code: MTQNYRITLLPGDGIGPEIMAVAVDVLKVVGQQFDIQFDFQEALIGGAAIDATGEPLPSATLDTCRHSDAVLLAAIGGYKWDSLPPHQRPEGGLLGLRAGLELFANLRPAQILPQLIDASTLKREVVEGVDIMVVRELTGGIYFGKPRGIFTTETGEKRGVNTMVYTESEIDRIGRIAFETARKRRGKLCSVDKANVLDVSQLWRDRITNLSQEYPDVELSHLYVDNAAMQLVRAPKQFDTIVTGNLFGDILSDAAAMLTGSIGMLPSASLGASGPGVFEPVHGSAPDIAGQDKANPLAQVLSAAMMLRYALDQPQAADKIEQAVLQVLEQGDRTGDIISVGMNLLGCRGMGDSLIKALAKS.

78-91 (GYKWDSLPPHQRPE) contacts NAD(+). Arginine 98, arginine 108, arginine 136, and aspartate 226 together coordinate substrate. Mg(2+) contacts are provided by aspartate 226, aspartate 250, and aspartate 254. 284–296 (GSAPDIAGQDKAN) contributes to the NAD(+) binding site.

It belongs to the isocitrate and isopropylmalate dehydrogenases family. LeuB type 1 subfamily. In terms of assembly, homodimer. The cofactor is Mg(2+). Mn(2+) serves as cofactor.

Its subcellular location is the cytoplasm. It catalyses the reaction (2R,3S)-3-isopropylmalate + NAD(+) = 4-methyl-2-oxopentanoate + CO2 + NADH. Its pathway is amino-acid biosynthesis; L-leucine biosynthesis; L-leucine from 3-methyl-2-oxobutanoate: step 3/4. Its function is as follows. Catalyzes the oxidation of 3-carboxy-2-hydroxy-4-methylpentanoate (3-isopropylmalate) to 3-carboxy-4-methyl-2-oxopentanoate. The product decarboxylates to 4-methyl-2 oxopentanoate. This is 3-isopropylmalate dehydrogenase from Nostoc sp. (strain PCC 7120 / SAG 25.82 / UTEX 2576).